The chain runs to 208 residues: Probable Brix domain-containing ribosomal biogenesis protein (208 aa).

The region spanning 1–196 (MMLITTSHRP…IWIMEDGRRW (196 aa)) is the Brix domain.

Its function is as follows. Probably involved in the biogenesis of the ribosome. The chain is Probable Brix domain-containing ribosomal biogenesis protein from Thermococcus kodakarensis (strain ATCC BAA-918 / JCM 12380 / KOD1) (Pyrococcus kodakaraensis (strain KOD1)).